The sequence spans 88 residues: UPF0335 protein Mnod_5968 (88 aa).

The protein belongs to the UPF0335 family.

This is UPF0335 protein Mnod_5968 from Methylobacterium nodulans (strain LMG 21967 / CNCM I-2342 / ORS 2060).